A 733-amino-acid chain; its full sequence is Ribosomal protein S6 kinase 2 alpha (733 aa).

Residues 18 to 38 (EDPENGHGSPEEGGRHTSKDE) are disordered. Residues 62-321 (FVLLKVLGQG…AEEIKRQPFF (260 aa)) enclose the Protein kinase 1 domain. ATP contacts are provided by residues 68 to 76 (LGQGSFGKV) and Lys94. Residue Asp187 is the Proton acceptor of the active site. The residue at position 221 (Ser221) is a Phosphoserine. In terms of domain architecture, AGC-kinase C-terminal spans 322-391 (STIDWNKLFR…VAPALVEEDA (70 aa)). Position 359 is a phosphothreonine (Thr359). At Ser363 the chain carries Phosphoserine. A Phosphoserine; by autocatalysis modification is found at Ser380. The Protein kinase 2 domain maps to 416–673 (YTVRETIGVG…AKQVLQHEWI (258 aa)). ATP is bound by residues 422-430 (IGVGSYSVC) and Lys445. Asp533 acts as the Proton acceptor in catalysis. Residue Thr571 is modified to Phosphothreonine. Phosphoserine is present on Ser730.

Belongs to the protein kinase superfamily. AGC Ser/Thr protein kinase family. S6 kinase subfamily. Mg(2+) is required as a cofactor. In terms of processing, autophosphorylated on Ser-380, as part of the activation process.

It carries out the reaction L-seryl-[protein] + ATP = O-phospho-L-seryl-[protein] + ADP + H(+). It catalyses the reaction L-threonyl-[protein] + ATP = O-phospho-L-threonyl-[protein] + ADP + H(+). With respect to regulation, activated by multiple phosphorylations on threonine and serine residues. Its function is as follows. Serine/threonine kinase that may play a role in mediating the growth-factor and stress induced activation of transcription. The chain is Ribosomal protein S6 kinase 2 alpha (rps6ka) from Xenopus laevis (African clawed frog).